Consider the following 23-residue polypeptide: YSSQLAQVQGLIGNVESQLAEIR.

The region spanning Tyr1 to Arg23 is the IF rod domain. The coil 2 stretch occupies residues Tyr1–Arg23.

This sequence belongs to the intermediate filament family.

In Cervus elaphus (Red deer), this protein is Keratin.